Reading from the N-terminus, the 120-residue chain is UPF0231 protein CKO_03249 (120 aa).

Belongs to the UPF0231 family.

The polypeptide is UPF0231 protein CKO_03249 (Citrobacter koseri (strain ATCC BAA-895 / CDC 4225-83 / SGSC4696)).